Consider the following 120-residue polypeptide: Large ribosomal subunit protein bL17 (120 aa).

It belongs to the bacterial ribosomal protein bL17 family. In terms of assembly, part of the 50S ribosomal subunit. Contacts protein L32.

The protein is Large ribosomal subunit protein bL17 of Bacillus velezensis (strain DSM 23117 / BGSC 10A6 / LMG 26770 / FZB42) (Bacillus amyloliquefaciens subsp. plantarum).